The sequence spans 290 residues: Fructose-1,6-bisphosphatase class 1 (290 aa).

Glu78, Asp96, Leu98, and Asp99 together coordinate Mg(2+). Substrate is bound by residues 99–102, Tyr201, and Lys226; that span reads DGSS. Residue Glu232 coordinates Mg(2+).

Belongs to the FBPase class 1 family. In terms of assembly, homotetramer. Requires Mg(2+) as cofactor.

It localises to the cytoplasm. The enzyme catalyses beta-D-fructose 1,6-bisphosphate + H2O = beta-D-fructose 6-phosphate + phosphate. Its pathway is carbohydrate biosynthesis; gluconeogenesis. In Helicobacter pylori (strain G27), this protein is Fructose-1,6-bisphosphatase class 1.